Reading from the N-terminus, the 82-residue chain is Small ribosomal subunit protein bS20 (82 aa).

It belongs to the bacterial ribosomal protein bS20 family.

Binds directly to 16S ribosomal RNA. The protein is Small ribosomal subunit protein bS20 of Lysinibacillus sphaericus (strain C3-41).